The primary structure comprises 332 residues: Ketol-acid reductoisomerase (NADP(+)) (332 aa).

Residues 2 to 182 (AKIYHDLEVS…GATRAGVLET (181 aa)) enclose the KARI N-terminal Rossmann domain. NADP(+)-binding positions include 25 to 28 (YGSQ), R48, S53, and 83 to 86 (DTEQ). H108 is an active-site residue. Residue G134 coordinates NADP(+). Residues 183–328 (TFKEETETDL…KVIREMMPWL (146 aa)) form the KARI C-terminal knotted domain. The Mg(2+) site is built by D191, E195, E227, and E231. S252 contributes to the substrate binding site.

This sequence belongs to the ketol-acid reductoisomerase family. Mg(2+) serves as cofactor.

The catalysed reaction is (2R)-2,3-dihydroxy-3-methylbutanoate + NADP(+) = (2S)-2-acetolactate + NADPH + H(+). It carries out the reaction (2R,3R)-2,3-dihydroxy-3-methylpentanoate + NADP(+) = (S)-2-ethyl-2-hydroxy-3-oxobutanoate + NADPH + H(+). Its pathway is amino-acid biosynthesis; L-isoleucine biosynthesis; L-isoleucine from 2-oxobutanoate: step 2/4. The protein operates within amino-acid biosynthesis; L-valine biosynthesis; L-valine from pyruvate: step 2/4. Functionally, involved in the biosynthesis of branched-chain amino acids (BCAA). Catalyzes an alkyl-migration followed by a ketol-acid reduction of (S)-2-acetolactate (S2AL) to yield (R)-2,3-dihydroxy-isovalerate. In the isomerase reaction, S2AL is rearranged via a Mg-dependent methyl migration to produce 3-hydroxy-3-methyl-2-ketobutyrate (HMKB). In the reductase reaction, this 2-ketoacid undergoes a metal-dependent reduction by NADPH to yield (R)-2,3-dihydroxy-isovalerate. The protein is Ketol-acid reductoisomerase (NADP(+)) of Dictyoglomus thermophilum (strain ATCC 35947 / DSM 3960 / H-6-12).